The chain runs to 97 residues: Large ribosomal subunit protein bL27 (97 aa).

Positions 1 to 12 (MLKMNLANLQLF) are excised as a propeptide. The interval 14 to 37 (HKKGGGSTSNGRDSQAKRLGAKAA) is disordered.

The protein belongs to the bacterial ribosomal protein bL27 family. In terms of processing, the N-terminus is cleaved by ribosomal processing cysteine protease Prp.

This Streptococcus agalactiae serotype III (strain NEM316) protein is Large ribosomal subunit protein bL27.